Here is a 910-residue protein sequence, read N- to C-terminus: 2-oxoglutarate dehydrogenase E1 component (910 aa).

This sequence belongs to the alpha-ketoglutarate dehydrogenase family. In terms of assembly, homodimer. Part of the 2-oxoglutarate dehydrogenase (OGDH) complex composed of E1 (2-oxoglutarate dehydrogenase), E2 (dihydrolipoamide succinyltransferase) and E3 (dihydrolipoamide dehydrogenase); the complex contains multiple copies of the three enzymatic components (E1, E2 and E3). The cofactor is thiamine diphosphate.

It carries out the reaction N(6)-[(R)-lipoyl]-L-lysyl-[protein] + 2-oxoglutarate + H(+) = N(6)-[(R)-S(8)-succinyldihydrolipoyl]-L-lysyl-[protein] + CO2. Functionally, E1 component of the 2-oxoglutarate dehydrogenase (OGDH) complex which catalyzes the decarboxylation of 2-oxoglutarate, the first step in the conversion of 2-oxoglutarate to succinyl-CoA and CO(2). The polypeptide is 2-oxoglutarate dehydrogenase E1 component (Staphylococcus aureus (strain N315)).